The chain runs to 230 residues: Large ribosomal subunit protein uL1c (230 aa).

It belongs to the universal ribosomal protein uL1 family. Part of the 50S ribosomal subunit.

It is found in the plastid. The protein localises to the chloroplast. Functionally, binds directly to 23S rRNA. Might be involved in E site tRNA release (Potential). This Phaeodactylum tricornutum (strain CCAP 1055/1) protein is Large ribosomal subunit protein uL1c (rpl1).